A 261-amino-acid polypeptide reads, in one-letter code: Zinc finger protein 664 (261 aa).

9 C2H2-type zinc fingers span residues 3-25 (YKCP…QKIH), 31-53 (HKCD…WRDH), 59-81 (YKCD…KKIH), 87-109 (YKCY…MRVH), 115-137 (YVCS…QRVH), 143-165 (FKCE…QRVH), 171-193 (YKCY…QRVH), 199-221 (YRCC…QRVH), and 227-249 (FKCD…QRVH). A Glycyl lysine isopeptide (Lys-Gly) (interchain with G-Cter in SUMO2) cross-link involves residue lysine 257.

This sequence belongs to the krueppel C2H2-type zinc-finger protein family.

It localises to the nucleus. May be involved in transcriptional regulation. The sequence is that of Zinc finger protein 664 (Znf664) from Mus musculus (Mouse).